Reading from the N-terminus, the 1101-residue chain is Type II inositol polyphosphate 5-phosphatase 15 (1101 aa).

The span at 31 to 40 (RSAYSSSSSS) shows a compositional bias: low complexity. A disordered region spans residues 31 to 54 (RSAYSSSSSSGDDESQPSVDDSNK). WD repeat units follow at residues 121-162 (LRET…GSGR), 180-219 (FGSAAVVCMIGDEGSRVVWSGHRDGRIRCWRLRGDHGIEE), 225-263 (AHRGPVLSIAISAYGDIWSGSEGGALKVWPWDGALGKSL), 403-432 (DDSRKTEAIVISVDGMIWTGSSNGILMRWD), 433-481 (GNGN…GGWV), and 483-519 (HSGPVIKMAIGAGYLFTLANHGGIRGWNVTSPGPLDN). 2 catalytic regions span residues 749–765 (DMVIFLGDFNYRLDDIT) and 828–843 (KKRIPAWCDRILYRDN). Lysine 907 participates in a covalent cross-link: Glycyl lysine isopeptide (Lys-Gly) (interchain with G-Cter in ubiquitin).

Belongs to the inositol polyphosphate 5-phosphatase family. The cofactor is Mg(2+). In terms of tissue distribution, predominantly expressed in interfascicular fibers and vascular bundles. Expressed in seedlings, stems, roots and flowers. Expressed at lower level in mature leaves.

It carries out the reaction a 1,2-diacyl-sn-glycero-3-phospho-(1D-myo-inositol-4,5-bisphosphate) + H2O = a 1,2-diacyl-sn-glycero-3-phospho-(1D-myo-inositol 4-phosphate) + phosphate. The enzyme catalyses a 1,2-diacyl-sn-glycero-3-phospho-(1D-myo-inositol-3,4,5-trisphosphate) + H2O = a 1,2-diacyl-sn-glycero-3-phospho-(1D-myo-inositol-3,4-bisphosphate) + phosphate. It catalyses the reaction 1D-myo-inositol 1,4,5-trisphosphate + H2O = 1D-myo-inositol 1,4-bisphosphate + phosphate. In terms of biological role, has phosphatase activity toward PtdIns(4,5)P2, PtdIns(3,4,5)P3 and Ins(1,4,5)P3. Has a higher substrate affinity toward PtdIns(4,5)P2. Required for secondary wall synthesis and actin organization in fiber cells. The sequence is that of Type II inositol polyphosphate 5-phosphatase 15 from Arabidopsis thaliana (Mouse-ear cress).